The primary structure comprises 513 residues: E3 ubiquitin-protein ligase RNF25 (513 aa).

One can recognise an RWD domain in the interval 9-117 (SEIEVLQSIY…ERAKEILTDS (109 aa)). Zn(2+) contacts are provided by C124, C127, C142, H144, H147, C150, C187, and C190. The RING-type; atypical zinc finger occupies 124–191 (CVICLYDFKE…ELAVVCPVCR (68 aa)). The tract at residues 261-513 (NLSDTPGMTD…EKEFRKEGVL (253 aa)) is disordered. The segment covering 271–297 (SSGAESSQSLPSSSPDSTSTTQTSQNQ) has biased composition (low complexity). Composition is skewed to polar residues over residues 345–397 (SDKI…QDML) and 406–423 (EVSQ…QTIL). Positions 426 to 440 (GHPEREHVGRGDKRG) are enriched in basic and acidic residues. The segment covering 482 to 498 (AGRGHRGGGAYRGGGRG) has biased composition (gly residues). Basic and acidic residues predominate over residues 501–513 (QRVEKEFRKEGVL).

This sequence belongs to the RNF25 family.

It is found in the cytoplasm. The enzyme catalyses S-ubiquitinyl-[E2 ubiquitin-conjugating enzyme]-L-cysteine + [acceptor protein]-L-lysine = [E2 ubiquitin-conjugating enzyme]-L-cysteine + N(6)-ubiquitinyl-[acceptor protein]-L-lysine.. It participates in protein modification; protein ubiquitination. Its function is as follows. E3 ubiquitin-protein ligase that plays a key role in the RNF14-RNF25 translation quality control pathway, a pathway that takes place when a ribosome has stalled during translation, and which promotes ubiquitination and degradation of translation factors on stalled ribosomes. May also acts as a positive regulator of the Wnt signaling. The protein is E3 ubiquitin-protein ligase RNF25 of Danio rerio (Zebrafish).